Here is a 261-residue protein sequence, read N- to C-terminus: Short-chain dehydrogenase/reductase ARMGADRAFT_1018421 (261 aa).

Positions 21, 68, 95, 128, 161, 165, 194, and 196 each coordinate NADP(+). Y161 acts as the Proton acceptor in catalysis. The Lowers pKa of active site Tyr role is filled by K165.

Belongs to the short-chain dehydrogenases/reductases (SDR) family.

Its pathway is secondary metabolite biosynthesis. Its function is as follows. Short-chain dehydrogenase/reductase, part of the gene cluster that mediates the biosynthesis of melleolides, a range of antifungal and phytotoxic polyketide derivatives composed of an orsellinic acid (OA) moiety esterified to various sesquiterpene alcohols. The first step in melleolides biosynthesis is performed by the delta(6)-protoilludene synthase PRO1 which catalyzes the cyclization of farnesyl diphosphate to protoilludene. The orsellinic acid synthase armB produces OA by condensing acetyl-CoA with 3 malonyl-CoA units in a three-round chain elongation reaction folowed by a C2-C7 ring closure. ArmB further catalyzes the trans-esterification of OA to the various sesquiterpene alcohols resulting from the hydroxylation of protoilludene. The melleolides cluster also includes 5 cytochrome P450 monooxygenases, 4 NAD(+)-dependent oxidoreductases, one flavin-dependent oxidoreductase, and one O-methyltransferase. The cytochrome P450 monooxygenases may be involved in protoilludene hydroxylation to elaborate melleolides with multiple alcohol groups, such as melleolide D, which carries alcohol functionalities at C-4, C-5, C-10, and C-13. The role of the NAD(+)-dependent enzymes remains unknown. Numerous melleolides, including arnamial, show 5'-O-methylation of the aromatic moiety which may be catalyzed by the methyltransferase encoded in the cluster. The flavin-dependent oxidoreductase might represent the dehydrogenase yielding the aldehyde in position 1 of arnamial and other melleolides. Finally, several halogenase localized outside of the cluster, are able to catalyze the transfer of a single chlorine atom to the melleolide backbone, resulting in a 6'-chloromelleolide product. In Armillaria gallica (Bulbous honey fungus), this protein is Short-chain dehydrogenase/reductase ARMGADRAFT_1018421.